The chain runs to 210 residues: ATP-dependent Clp protease proteolytic subunit (210 aa).

Ser-107 (nucleophile) is an active-site residue. His-132 is a catalytic residue.

This sequence belongs to the peptidase S14 family. As to quaternary structure, fourteen ClpP subunits assemble into 2 heptameric rings which stack back to back to give a disk-like structure with a central cavity, resembling the structure of eukaryotic proteasomes.

Its subcellular location is the cytoplasm. The catalysed reaction is Hydrolysis of proteins to small peptides in the presence of ATP and magnesium. alpha-casein is the usual test substrate. In the absence of ATP, only oligopeptides shorter than five residues are hydrolyzed (such as succinyl-Leu-Tyr-|-NHMec, and Leu-Tyr-Leu-|-Tyr-Trp, in which cleavage of the -Tyr-|-Leu- and -Tyr-|-Trp bonds also occurs).. In terms of biological role, cleaves peptides in various proteins in a process that requires ATP hydrolysis. Has a chymotrypsin-like activity. Plays a major role in the degradation of misfolded proteins. This is ATP-dependent Clp protease proteolytic subunit from Zymomonas mobilis subsp. mobilis (strain ATCC 31821 / ZM4 / CP4).